We begin with the raw amino-acid sequence, 417 residues long: Gamma-glutamyl phosphate reductase (417 aa).

It belongs to the gamma-glutamyl phosphate reductase family.

Its subcellular location is the cytoplasm. It catalyses the reaction L-glutamate 5-semialdehyde + phosphate + NADP(+) = L-glutamyl 5-phosphate + NADPH + H(+). It participates in amino-acid biosynthesis; L-proline biosynthesis; L-glutamate 5-semialdehyde from L-glutamate: step 2/2. In terms of biological role, catalyzes the NADPH-dependent reduction of L-glutamate 5-phosphate into L-glutamate 5-semialdehyde and phosphate. The product spontaneously undergoes cyclization to form 1-pyrroline-5-carboxylate. The sequence is that of Gamma-glutamyl phosphate reductase from Serratia marcescens.